The primary structure comprises 160 residues: Phosphopantetheine adenylyltransferase (160 aa).

Threonine 11 contributes to the substrate binding site. ATP is bound by residues 11-12 (TF) and histidine 19. Lysine 43, threonine 75, and arginine 89 together coordinate substrate. ATP is bound by residues 90-92 (GLR), glutamate 100, and 125-131 (YSFLSSS).

Belongs to the bacterial CoaD family. In terms of assembly, homohexamer. The cofactor is Mg(2+).

It is found in the cytoplasm. It carries out the reaction (R)-4'-phosphopantetheine + ATP + H(+) = 3'-dephospho-CoA + diphosphate. It participates in cofactor biosynthesis; coenzyme A biosynthesis; CoA from (R)-pantothenate: step 4/5. Reversibly transfers an adenylyl group from ATP to 4'-phosphopantetheine, yielding dephospho-CoA (dPCoA) and pyrophosphate. The protein is Phosphopantetheine adenylyltransferase of Listeria monocytogenes serovar 1/2a (strain ATCC BAA-679 / EGD-e).